We begin with the raw amino-acid sequence, 411 residues long: Tyrosine--tRNA ligase (411 aa).

Y34 is an L-tyrosine binding site. Residues 39 to 48 carry the 'HIGH' region motif; the sequence is CTATSLHIGS. Positions 171 and 175 each coordinate L-tyrosine. Positions 231 to 235 match the 'KMSKS' region motif; that stretch reads KMGKT. Residue K234 coordinates ATP. The region spanning 345 to 411 is the S4 RNA-binding domain; it reads ISAYELFHEA…GKKRHILVRV (67 aa).

Belongs to the class-I aminoacyl-tRNA synthetase family. TyrS type 1 subfamily. As to quaternary structure, homodimer.

The protein resides in the cytoplasm. The enzyme catalyses tRNA(Tyr) + L-tyrosine + ATP = L-tyrosyl-tRNA(Tyr) + AMP + diphosphate + H(+). Catalyzes the attachment of tyrosine to tRNA(Tyr) in a two-step reaction: tyrosine is first activated by ATP to form Tyr-AMP and then transferred to the acceptor end of tRNA(Tyr). This chain is Tyrosine--tRNA ligase, found in Rickettsia africae (strain ESF-5).